The chain runs to 243 residues: 3-deoxy-manno-octulosonate cytidylyltransferase (243 aa).

This sequence belongs to the KdsB family.

Its subcellular location is the cytoplasm. The catalysed reaction is 3-deoxy-alpha-D-manno-oct-2-ulosonate + CTP = CMP-3-deoxy-beta-D-manno-octulosonate + diphosphate. Its pathway is nucleotide-sugar biosynthesis; CMP-3-deoxy-D-manno-octulosonate biosynthesis; CMP-3-deoxy-D-manno-octulosonate from 3-deoxy-D-manno-octulosonate and CTP: step 1/1. It functions in the pathway bacterial outer membrane biogenesis; lipopolysaccharide biosynthesis. Functionally, activates KDO (a required 8-carbon sugar) for incorporation into bacterial lipopolysaccharide in Gram-negative bacteria. The polypeptide is 3-deoxy-manno-octulosonate cytidylyltransferase (Helicobacter acinonychis (strain Sheeba)).